The chain runs to 300 residues: Homoserine kinase (300 aa).

Proline 87–alanine 97 provides a ligand contact to ATP.

Belongs to the GHMP kinase family. Homoserine kinase subfamily.

Its subcellular location is the cytoplasm. The catalysed reaction is L-homoserine + ATP = O-phospho-L-homoserine + ADP + H(+). Its pathway is amino-acid biosynthesis; L-threonine biosynthesis; L-threonine from L-aspartate: step 4/5. Its function is as follows. Catalyzes the ATP-dependent phosphorylation of L-homoserine to L-homoserine phosphate. The chain is Homoserine kinase from Clostridium kluyveri (strain ATCC 8527 / DSM 555 / NBRC 12016 / NCIMB 10680 / K1).